A 668-amino-acid polypeptide reads, in one-letter code: DNA ligase (668 aa).

NAD(+)-binding positions include 34–38 (DAEYD), 83–84 (SL), and Glu-113. The active-site N6-AMP-lysine intermediate is the Lys-115. Arg-136, Glu-170, Lys-286, and Lys-310 together coordinate NAD(+). Zn(2+) is bound by residues Cys-404, Cys-407, Cys-422, and Cys-427. A BRCT domain is found at 590–668 (ESDSYFAGKT…EVKMLEELKK (79 aa)).

This sequence belongs to the NAD-dependent DNA ligase family. LigA subfamily. Requires Mg(2+) as cofactor. The cofactor is Mn(2+).

The enzyme catalyses NAD(+) + (deoxyribonucleotide)n-3'-hydroxyl + 5'-phospho-(deoxyribonucleotide)m = (deoxyribonucleotide)n+m + AMP + beta-nicotinamide D-nucleotide.. Functionally, DNA ligase that catalyzes the formation of phosphodiester linkages between 5'-phosphoryl and 3'-hydroxyl groups in double-stranded DNA using NAD as a coenzyme and as the energy source for the reaction. It is essential for DNA replication and repair of damaged DNA. The protein is DNA ligase of Bacillus pumilus (strain SAFR-032).